Here is a 449-residue protein sequence, read N- to C-terminus: VIRF-1 (449 aa).

The segment at 1–60 is disordered; sequence MDPGQRPNPFGAPGAIPKKPCLSQGSPGTSGSGAPCDEPSRSESPGEGPSGTGGSAAAGD. Positions 89 to 195 form a DNA-binding region, IRF tryptophan pentad repeat; that stretch reads KASIKDWIVC…HHFLVFRVRK (107 aa). N6-propionyllysine; by host is present on residues K406 and K442.

This sequence belongs to the IRF family. Forms homodimers. Interacts with host IRF3, IRF7, and CREBBP. Interacts with host SYNCRIP. Interacts with host USP7. Interacts (via C-terminus) with host HERC5. Interacts with host GABARAPL1. Interacts with host SIRT6. In terms of processing, ISGylated. Propionylated in lysine residues Lys-406 and Lys-442, which is required for effective inhibition of IFN-beta production and antiviral signaling.

Its subcellular location is the host cytoplasm. Functionally, plays a role in the inhibition of host innate response by repressing the expression of interferon-inducible genes and blocking host IRF1- and IRF3-mediated transcription. Blocks the interaction between host IRF3 and CREBBP. Regulates the host cellular metabolism by increasing glucose uptake, ATP production and lactate secretion through down-regulation of heterogeneous nuclear ribonuclear protein Q1/SYNCRIP. Mechanistically, induces ubiquitination and degradation of SYNCRIP through the ubiquitin-proteasome pathway by recruiting KLHL3/CUL3 ubiquitin ligase complex. Disrupts host TP53 signaling pathway during viral infection by interacting with host USP7 and thereby decreasing the availability of USP7 for deubiquitinating and stabilizing TP53. Plays a role in the global inhibition of protein ISGylation by interacting with host HERC5 leading to its inhibition. Promotes its own propionylation by blocking SIRT6 interaction with ubiquitin-specific peptidase 10/USP10 leading to SIRT6 degradation via a ubiquitin-proteasome pathway. In turn, propionylation is required to block IRF3-CBP/p300 recruitment and to repress the STING DNA sensing pathway. Plays a role in the activation of mitophagy during infection via interaction with the host proteins NIX/BNIP3L, TUFM and GABARAPL1 thereby inhibiting antiviral responses and contributing to productive replication. The protein is VIRF-1 (vIRF-1) of Homo sapiens (Human).